Reading from the N-terminus, the 153-residue chain is Jacalin-related lectin Calsepa (153 aa).

A2 is subject to N-acetylalanine. The Jacalin-type lectin domain maps to 6-152 (DTISGPWGNN…VDAIGTYNRH (147 aa)). 3 N-glycan binding regions span residues 17-18 (GN), 95-96 (DN), and 140-144 (GYYVD).

The protein belongs to the jacalin lectin family. Homodimer. In terms of processing, not glycosylated. Rhizome (at protein level). Detected in the cortex and the pith of rhizome. Not detected in vascular tissues, pericycle, endodermis or rhizodermis.

Its subcellular location is the cytoplasm. Hemagglutinating activity is most inhibited by methyl alpha-mannopyranoside. This activity is inhibited to a less extent (about a third of the inhibition of that of methyl alpha-mannopyranoside) by methyl alpha-glucoside, other alpha-glucosides, such as maltose, isomaltose, panose or palatinose, and alpha-glucosides modified at the second position, such as methyl 2-deoxy-alpha-arabinoglucopyranoside or methyl 2-acetamido-2-deoxy alpha-glucopyranoside. Mildly inhibited by free monosaccharides, with glucose presenting at least 20-fold less inhibitory effect on hemagglutinating activity than mannose. Glycoproteins are somewhat inhibitory, the best being asialothyroglobulin and ovomucoid. Not inhibited by isomaltitol, sucrose or trehalose. Its function is as follows. Mannose-binding lectin. Preferentially binds mannose at concentrations ranging between 5 and 25 mM, but also binds glucose. Has a marked preference for methylated sugar derivatives, such as alpha-MeMan and alpha-MeGlc, at concentration down to 5 mM. Binds to N-glycans, but not to glycolipid-type or other type of glycans. Binds N-linked high-mannose-type glycans. Has a preference for smaller (Man(2)-Man(6)) high-mannose-type glycans to larger (Man(7)-Man(9)) ones. Recognizes both alpha1-6 extended and alpha1-3 extended monoantennary glycans. The addition of alpha1-2Man to the Man-alpha1-3Man-beta branch results in a significant loss of affinity, but beta1-2GlcNAc has some affinity. Has less affinity for biantennary glycans. However, affinity is significant for the biantennary complex-type N-glycans with bisecting GlcNAc. No affinity is observed for tri- and tetra-antennary glycans. Binds bisected glycans of the mouse brain. Selectively binds to bisecting N-glycans which are in back-fold conformation, and does not favor a glycan with an extend conformation. Has hemagglutinating activity against rabbit erythrocytes at 0.3 ug/ml and against trypsin-treated human erythrocytes at 5 ug/ml. Has mitogenic activity in murine cells. The chain is Jacalin-related lectin Calsepa from Calystegia sepium (Hedge bindweed).